A 320-amino-acid chain; its full sequence is Cytochrome c1-1, heme protein, mitochondrial (320 aa).

Residues 1–77 (MSLGKKIRIG…LLSFATIAYS (77 aa)) constitute a mitochondrion transit peptide. Over 78 to 280 (DEAEHGLECP…WAAEPEMEER (203 aa)) the chain is Mitochondrial intermembrane. The 108-residue stretch at 103–210 (ASIRRGHQVY…NGQNYVFALL (108 aa)) folds into the Cytochrome c domain. Positions 116, 119, 120, and 239 each coordinate heme c. A helical membrane pass occupies residues 281–301 (KLMGFKWIFVLSLALLQAAYY). Residues 302 to 320 (RRLRWSVLKSRKLVLDVVN) lie on the Mitochondrial matrix side of the membrane.

It belongs to the cytochrome c family. Component of the ubiquinol-cytochrome c oxidoreductase (cytochrome b-c1 complex, complex III, CIII), a multisubunit enzyme composed of 3 respiratory subunits cytochrome b, cytochrome c1 and Rieske protein, 2 core protein subunits, and additional low-molecular weight protein subunits. The complex exists as an obligatory dimer and forms supercomplexes (SCs) in the inner mitochondrial membrane with cytochrome c oxidase (complex IV, CIV). It depends on heme c as a cofactor. In all tissues analyzed.

The protein localises to the mitochondrion inner membrane. The enzyme catalyses a quinol + 2 Fe(III)-[cytochrome c](out) = a quinone + 2 Fe(II)-[cytochrome c](out) + 2 H(+)(out). Its function is as follows. Component of the ubiquinol-cytochrome c oxidoreductase, a multisubunit transmembrane complex that is part of the mitochondrial electron transport chain which drives oxidative phosphorylation. The respiratory chain contains 3 multisubunit complexes succinate dehydrogenase (complex II, CII), ubiquinol-cytochrome c oxidoreductase (cytochrome b-c1 complex, complex III, CIII) and cytochrome c oxidase (complex IV, CIV), that cooperate to transfer electrons derived from NADH and succinate to molecular oxygen, creating an electrochemical gradient over the inner membrane that drives transmembrane transport and the ATP synthase. The cytochrome b-c1 complex catalyzes electron transfer from ubiquinol to cytochrome c, linking this redox reaction to translocation of protons across the mitochondrial inner membrane, with protons being carried across the membrane as hydrogens on the quinol. In the process called Q cycle, 2 protons are consumed from the matrix, 4 protons are released into the intermembrane space and 2 electrons are passed to cytochrome c. Cytochrome c1 is a catalytic core subunit containing a c-type heme. It transfers electrons from the [2Fe-2S] iron-sulfur cluster of the Rieske protein to cytochrome c. The sequence is that of Cytochrome c1-1, heme protein, mitochondrial (CYCL) from Solanum tuberosum (Potato).